Reading from the N-terminus, the 349-residue chain is Twinfilin-2-A (349 aa).

ADF-H domains are found at residues 4–139 (QTGI…KHVS) and 177–313 (GLSF…DEVH). Residues 321-349 (QAFAKPKGPAGKRGQKRLIKGPGENGEDS) form a disordered region.

This sequence belongs to the actin-binding proteins ADF family. Twinfilin subfamily. In terms of assembly, interacts with G-actin; ADP-actin form and capping protein (CP).

It localises to the cytoplasm. The protein localises to the cytoskeleton. Its subcellular location is the perinuclear region. Actin-binding protein involved in motile and morphological processes. Inhibits actin polymerization, likely by sequestering G-actin. This chain is Twinfilin-2-A (twf2-a), found in Xenopus laevis (African clawed frog).